We begin with the raw amino-acid sequence, 271 residues long: Type III pantothenate kinase (271 aa).

An ATP-binding site is contributed by 6 to 13 (DVRNTHTV). 109–112 (GADR) serves as a coordination point for substrate. Residue Asp-111 is the Proton acceptor of the active site. Asp-131 lines the K(+) pocket. Ser-134 provides a ligand contact to ATP. A substrate-binding site is contributed by Thr-186.

The protein belongs to the type III pantothenate kinase family. In terms of assembly, homodimer. NH4(+) serves as cofactor. It depends on K(+) as a cofactor.

Its subcellular location is the cytoplasm. It carries out the reaction (R)-pantothenate + ATP = (R)-4'-phosphopantothenate + ADP + H(+). The protein operates within cofactor biosynthesis; coenzyme A biosynthesis; CoA from (R)-pantothenate: step 1/5. Its function is as follows. Catalyzes the phosphorylation of pantothenate (Pan), the first step in CoA biosynthesis. This Mycobacteroides abscessus (strain ATCC 19977 / DSM 44196 / CCUG 20993 / CIP 104536 / JCM 13569 / NCTC 13031 / TMC 1543 / L948) (Mycobacterium abscessus) protein is Type III pantothenate kinase.